We begin with the raw amino-acid sequence, 137 residues long: Small ribosomal subunit protein bS6 (137 aa).

Residues 99 to 137 (LSPMKAAESREDRRSGGDDRPRRSADSEERQSASQDEEE) are disordered. Positions 105–129 (AESREDRRSGGDDRPRRSADSEERQ) are enriched in basic and acidic residues.

The protein belongs to the bacterial ribosomal protein bS6 family.

Binds together with bS18 to 16S ribosomal RNA. The sequence is that of Small ribosomal subunit protein bS6 from Marinobacter nauticus (strain ATCC 700491 / DSM 11845 / VT8) (Marinobacter aquaeolei).